Consider the following 527-residue polypeptide: Probable pectinesterase/pectinesterase inhibitor 32 (527 aa).

A signal peptide spans 1-24; sequence MAKFRQMGSSIFFLFLIIISLCSA. The tract at residues 25 to 165 is pectinesterase inhibitor 32; it reads HKEAFSSTDL…GTTVRNLLTM (141 aa). N-linked (GlcNAc...) asparagine glycans are attached at residues Asn-110, Asn-209, Asn-224, and Asn-280. Residues 214-511 form a pectinesterase 32 region; sequence DAVVAADGTG…FTVSQLIQGN (298 aa). Residues Thr-289 and Gln-319 each coordinate substrate. Asp-342 functions as the Proton donor; for pectinesterase activity in the catalytic mechanism. The cysteines at positions 356 and 376 are disulfide-linked. Catalysis depends on Asp-363, which acts as the Nucleophile; for pectinesterase activity. Asn-423 carries an N-linked (GlcNAc...) asparagine glycan. Arg-431 and Trp-433 together coordinate substrate. Residues Asn-494 and Asn-501 are each glycosylated (N-linked (GlcNAc...) asparagine).

The protein in the N-terminal section; belongs to the PMEI family. In the C-terminal section; belongs to the pectinesterase family. Expressed in siliques.

It is found in the secreted. Its subcellular location is the cell wall. The enzyme catalyses [(1-&gt;4)-alpha-D-galacturonosyl methyl ester](n) + n H2O = [(1-&gt;4)-alpha-D-galacturonosyl](n) + n methanol + n H(+). Its pathway is glycan metabolism; pectin degradation; 2-dehydro-3-deoxy-D-gluconate from pectin: step 1/5. Functionally, acts in the modification of cell walls via demethylesterification of cell wall pectin. This chain is Probable pectinesterase/pectinesterase inhibitor 32 (PME32), found in Arabidopsis thaliana (Mouse-ear cress).